The sequence spans 929 residues: Isoleucine--tRNA ligase (929 aa).

Positions 58-68 match the 'HIGH' region motif; sequence PYANGDIHIGH. Residue Glu563 coordinates L-isoleucyl-5'-AMP. A 'KMSKS' region motif is present at residues 605–609; the sequence is KMSKS. Lys608 serves as a coordination point for ATP. Zn(2+) contacts are provided by Cys892, Cys895, Cys912, and Cys915.

It belongs to the class-I aminoacyl-tRNA synthetase family. IleS type 1 subfamily. In terms of assembly, monomer. Zn(2+) is required as a cofactor.

The protein resides in the cytoplasm. The catalysed reaction is tRNA(Ile) + L-isoleucine + ATP = L-isoleucyl-tRNA(Ile) + AMP + diphosphate. Functionally, catalyzes the attachment of isoleucine to tRNA(Ile). As IleRS can inadvertently accommodate and process structurally similar amino acids such as valine, to avoid such errors it has two additional distinct tRNA(Ile)-dependent editing activities. One activity is designated as 'pretransfer' editing and involves the hydrolysis of activated Val-AMP. The other activity is designated 'posttransfer' editing and involves deacylation of mischarged Val-tRNA(Ile). This chain is Isoleucine--tRNA ligase, found in Neisseria meningitidis serogroup A / serotype 4A (strain DSM 15465 / Z2491).